The chain runs to 313 residues: Protein-methionine-sulfoxide reductase catalytic subunit MsrP (313 aa).

The tat-type signal signal peptide spans methionine 1–alanine 44. Mo-molybdopterin contacts are provided by residues asparagine 76, tyrosine 79–glutamate 80, cysteine 134, threonine 169, asparagine 217, arginine 222, and glycine 233–lysine 235.

It belongs to the MsrP family. Heterodimer of a catalytic subunit (MsrP) and a heme-binding subunit (MsrQ). The cofactor is Mo-molybdopterin. In terms of processing, predicted to be exported by the Tat system. The position of the signal peptide cleavage has not been experimentally proven.

Its subcellular location is the periplasm. The enzyme catalyses L-methionyl-[protein] + a quinone + H2O = L-methionyl-(S)-S-oxide-[protein] + a quinol. It carries out the reaction L-methionyl-[protein] + a quinone + H2O = L-methionyl-(R)-S-oxide-[protein] + a quinol. Functionally, part of the MsrPQ system that repairs oxidized periplasmic proteins containing methionine sulfoxide residues (Met-O), using respiratory chain electrons. Thus protects these proteins from oxidative-stress damage caused by reactive species of oxygen and chlorine generated by the host defense mechanisms. MsrPQ is essential for the maintenance of envelope integrity under bleach stress, rescuing a wide series of structurally unrelated periplasmic proteins from methionine oxidation. The catalytic subunit MsrP is non-stereospecific, being able to reduce both (R-) and (S-) diastereoisomers of methionine sulfoxide. The sequence is that of Protein-methionine-sulfoxide reductase catalytic subunit MsrP from Anaeromyxobacter dehalogenans (strain 2CP-C).